The sequence spans 431 residues: Probable indole-3-pyruvate monooxygenase YUCCA7 (431 aa).

36–41 (GAGPSG) contacts FAD. 207-212 (GCGNSG) is an NADP(+) binding site.

This sequence belongs to the FMO family. FAD is required as a cofactor. As to expression, expressed in shoot apex regions and siliques, and at high levels in roots. Detected in flowers, stems and leaves.

It carries out the reaction indole-3-pyruvate + NADPH + O2 + H(+) = (indol-3-yl)acetate + CO2 + NADP(+) + H2O. It participates in plant hormone metabolism; auxin biosynthesis. Functionally, involved in auxin biosynthesis. Belongs to the set of redundant YUCCA genes probably responsible for auxin biosynthesis in roots. This is Probable indole-3-pyruvate monooxygenase YUCCA7 (YUC7) from Arabidopsis thaliana (Mouse-ear cress).